A 92-amino-acid polypeptide reads, in one-letter code: Acylphosphatase (92 aa).

The Acylphosphatase-like domain maps to 5–92 (ATAAYVYGVV…TDYKGFTIRY (88 aa)). Residues arginine 20 and asparagine 38 contribute to the active site.

It belongs to the acylphosphatase family.

The enzyme catalyses an acyl phosphate + H2O = a carboxylate + phosphate + H(+). This Pectobacterium atrosepticum (strain SCRI 1043 / ATCC BAA-672) (Erwinia carotovora subsp. atroseptica) protein is Acylphosphatase (acyP).